Consider the following 154-residue polypeptide: Crossover junction endodeoxyribonuclease RuvC (154 aa).

Residues Asp-7, Glu-67, and Asp-139 contribute to the active site. Residues Asp-7, Glu-67, and Asp-139 each coordinate Mg(2+).

It belongs to the RuvC family. As to quaternary structure, homodimer which binds Holliday junction (HJ) DNA. The HJ becomes 2-fold symmetrical on binding to RuvC with unstacked arms; it has a different conformation from HJ DNA in complex with RuvA. In the full resolvosome a probable DNA-RuvA(4)-RuvB(12)-RuvC(2) complex forms which resolves the HJ. It depends on Mg(2+) as a cofactor.

The protein resides in the cytoplasm. The enzyme catalyses Endonucleolytic cleavage at a junction such as a reciprocal single-stranded crossover between two homologous DNA duplexes (Holliday junction).. In terms of biological role, the RuvA-RuvB-RuvC complex processes Holliday junction (HJ) DNA during genetic recombination and DNA repair. Endonuclease that resolves HJ intermediates. Cleaves cruciform DNA by making single-stranded nicks across the HJ at symmetrical positions within the homologous arms, yielding a 5'-phosphate and a 3'-hydroxyl group; requires a central core of homology in the junction. The consensus cleavage sequence is 5'-(A/T)TT(C/G)-3'. Cleavage occurs on the 3'-side of the TT dinucleotide at the point of strand exchange. HJ branch migration catalyzed by RuvA-RuvB allows RuvC to scan DNA until it finds its consensus sequence, where it cleaves and resolves the cruciform DNA. This Synechococcus sp. (strain CC9605) protein is Crossover junction endodeoxyribonuclease RuvC.